The primary structure comprises 199 residues: UPF0462 protein C4orf33 (199 aa).

Belongs to the UPF0462 family.

The protein is UPF0462 protein C4orf33 (C4orf33) of Homo sapiens (Human).